Reading from the N-terminus, the 183-residue chain is MGNSISKVLGKLFGSKEMKILMLGLDKAGKTTILYKLKLNKIKTSTPTVGFNVETVTYKNVKFNMWDVGGQQRLRPLWRHYFPATTALIFVIDSSARNRMEEAKEELYSIIGEKEMENVVLLVWANKQDLKDAMKPQEVSDFLELEKNLKNQPWCVIGSNALSGQGLVEGLSWISNNTNVPKK.

G2 carries the N-myristoyl glycine lipid modification. GTP is bound by residues 24–31 (GLDKAGKT), 67–71 (DVGGQ), and 126–129 (NKQD).

It belongs to the small GTPase superfamily. Arf family. In terms of assembly, interacts with RUD3.

The protein resides in the golgi apparatus. Its function is as follows. GTP-binding protein involved in protein trafficking; may modulate vesicle budding and uncoating within the Golgi apparatus. The protein is ADP-ribosylation factor 3 (ARF3) of Saccharomyces cerevisiae (strain ATCC 204508 / S288c) (Baker's yeast).